The following is a 670-amino-acid chain: Amyloid beta A4 precursor protein-binding family B member 1-interacting protein (670 aa).

Serine 55 carries the post-translational modification Phosphoserine. The region spanning 179 to 266 is the Ras-associating domain; sequence KKLVVKVHMD…KVLFLEKEER (88 aa). One can recognise a PH domain in the interval 313-422; it reads VPELEGALYL…WVMGIRIAKY (110 aa). Residues 449–653 form a disordered region; it reads VGTPMPAQPS…PGAPGNSEQD (205 aa). A compositionally biased stretch (polar residues) spans 456–475; it reads QPSTVSSGLKTGTSQPNGQM. Phosphoserine is present on serine 532. Residue threonine 534 is modified to Phosphothreonine. Position 537 is a phosphoserine (serine 537). Composition is skewed to pro residues over residues 553-567, 576-599, 606-615, and 625-634; these read PHPP…PPPP, LPPP…PPPA, LPPPPPPPPC, and PLPPKKPLVP.

Belongs to the MRL family. As to quaternary structure, interacts, through the N-terminal Pro-rich region, with the WW domain of APBB1. Interacts with RAP1A, PFN1, VASP and ENAH. In terms of tissue distribution, ubiquitously expressed with high expression in the hematopoietic system.

It is found in the cell membrane. The protein localises to the cell projection. Its subcellular location is the lamellipodium. The protein resides in the cell junction. It localises to the focal adhesion. It is found in the cytoplasm. The protein localises to the cytoskeleton. Functionally, appears to function in the signal transduction from Ras activation to actin cytoskeletal remodeling. Suppresses insulin-induced promoter activities through AP1 and SRE. Mediates Rap1-induced adhesion. The sequence is that of Amyloid beta A4 precursor protein-binding family B member 1-interacting protein (Apbb1ip) from Mus musculus (Mouse).